The chain runs to 201 residues: Adenylyl-sulfate kinase (201 aa).

35 to 42 (GLSGSGKS) is an ATP binding site. S109 acts as the Phosphoserine intermediate in catalysis.

Belongs to the APS kinase family.

The catalysed reaction is adenosine 5'-phosphosulfate + ATP = 3'-phosphoadenylyl sulfate + ADP + H(+). It functions in the pathway sulfur metabolism; hydrogen sulfide biosynthesis; sulfite from sulfate: step 2/3. Its function is as follows. Catalyzes the synthesis of activated sulfate. This chain is Adenylyl-sulfate kinase, found in Erwinia tasmaniensis (strain DSM 17950 / CFBP 7177 / CIP 109463 / NCPPB 4357 / Et1/99).